Reading from the N-terminus, the 212-residue chain is Ion-translocating oxidoreductase complex subunit G (212 aa).

A helical transmembrane segment spans residues 9 to 29 (GLLLGLFALLCTGLVAIVNQL). Thr-176 bears the FMN phosphoryl threonine mark.

Belongs to the RnfG family. As to quaternary structure, the complex is composed of six subunits: RnfA, RnfB, RnfC, RnfD, RnfE and RnfG. It depends on FMN as a cofactor.

It localises to the cell inner membrane. In terms of biological role, part of a membrane-bound complex that couples electron transfer with translocation of ions across the membrane. The protein is Ion-translocating oxidoreductase complex subunit G of Shewanella piezotolerans (strain WP3 / JCM 13877).